Consider the following 178-residue polypeptide: uncharacterized protein (178 aa).

This is an uncharacterized protein from Escherichia coli (strain K12).